The primary structure comprises 831 residues: Periplasmic nitrate reductase (831 aa).

Residues 1-29 (MTLSRRDFIKQTAVAATASVAGVTLPAGA) constitute a signal peptide (tat-type signal). The 4Fe-4S Mo/W bis-MGD-type domain occupies 41 to 97 (LKWSKAPCRFCGTGCGVTVAVRDNKVVATNGDPQAEVNKGLNCVKGYFLSKIMYGQD). [4Fe-4S] cluster is bound by residues Cys48, Cys51, Cys55, and Cys83. Residues Lys85, Gln152, Asn177, Cys181, 214-221 (WGSNMAEM), 245-249 (STFTH), 264-266 (QTD), Met375, Gln379, Asn485, 511-512 (SD), Lys534, Asp561, and 721-730 (TGRVLEHWHS) each bind Mo-bis(molybdopterin guanine dinucleotide). Position 797 (Trp797) interacts with substrate. Mo-bis(molybdopterin guanine dinucleotide)-binding residues include Asn805 and Lys822.

It belongs to the prokaryotic molybdopterin-containing oxidoreductase family. NasA/NapA/NarB subfamily. In terms of assembly, component of the periplasmic nitrate reductase NapAB complex composed of NapA and NapB. It depends on [4Fe-4S] cluster as a cofactor. Mo-bis(molybdopterin guanine dinucleotide) is required as a cofactor. In terms of processing, predicted to be exported by the Tat system. The position of the signal peptide cleavage has not been experimentally proven.

Its subcellular location is the periplasm. It catalyses the reaction 2 Fe(II)-[cytochrome] + nitrate + 2 H(+) = 2 Fe(III)-[cytochrome] + nitrite + H2O. Functionally, catalytic subunit of the periplasmic nitrate reductase complex NapAB. Receives electrons from NapB and catalyzes the reduction of nitrate to nitrite. This Cupriavidus taiwanensis (strain DSM 17343 / BCRC 17206 / CCUG 44338 / CIP 107171 / LMG 19424 / R1) (Ralstonia taiwanensis (strain LMG 19424)) protein is Periplasmic nitrate reductase.